The following is a 484-amino-acid chain: Glutamyl-tRNA(Gln) amidotransferase subunit A (484 aa).

Active-site charge relay system residues include Lys-76 and Ser-151. Ser-175 serves as the catalytic Acyl-ester intermediate.

Belongs to the amidase family. GatA subfamily. As to quaternary structure, heterotrimer of A, B and C subunits.

It carries out the reaction L-glutamyl-tRNA(Gln) + L-glutamine + ATP + H2O = L-glutaminyl-tRNA(Gln) + L-glutamate + ADP + phosphate + H(+). Its function is as follows. Allows the formation of correctly charged Gln-tRNA(Gln) through the transamidation of misacylated Glu-tRNA(Gln) in organisms which lack glutaminyl-tRNA synthetase. The reaction takes place in the presence of glutamine and ATP through an activated gamma-phospho-Glu-tRNA(Gln). In Thioalkalivibrio sulfidiphilus (strain HL-EbGR7), this protein is Glutamyl-tRNA(Gln) amidotransferase subunit A.